The primary structure comprises 344 residues: Lipase chaperone (344 aa).

The helical transmembrane segment at 13-35 (RIAPYGAAGLAAIVGVAIWSGTG) threads the bilayer.

This sequence belongs to the lipase chaperone family.

It localises to the cell inner membrane. In terms of biological role, may be involved in the folding of the extracellular lipase during its passage through the periplasm. The sequence is that of Lipase chaperone from Burkholderia vietnamiensis (strain G4 / LMG 22486) (Burkholderia cepacia (strain R1808)).